The following is a 219-amino-acid chain: Lipid transferase CIDEB (219 aa).

In terms of domain architecture, CIDE-N spans 34–110 (PQRPFRVCDH…VLQSGQSWSP (77 aa)).

This sequence belongs to the CIDE family. In terms of assembly, interacts with DFFA. Interacts with DFFB; inhibited by DFFB. Interacts with APOB. Interacts with PREB/SEC12; facilitating loading of SCAP-SREBP into COPII vesicles. (Microbial infection) Interacts (via N-terminus) with HCV non-structural protein 5A (via N-terminus); this interaction seems to regulate the association of HCV particles with ApoE. Highly expressed in liver and small intestine and, at lower levels, in colon, kidney and spleen.

It localises to the lipid droplet. It is found in the endoplasmic reticulum membrane. Its subcellular location is the golgi apparatus. The protein resides in the cytoplasmic vesicle. The protein localises to the COPI-coated vesicle. Its function is as follows. Lipid transferase specifically expressed in hepatocytes, which promotes unilocular lipid droplet formation by mediating lipid droplet fusion. Lipid droplet fusion promotes their enlargement, restricting lipolysis and favoring lipid storage. Localizes on the lipid droplet surface, at focal contact sites between lipid droplets, and mediates atypical lipid droplet fusion by promoting directional net neutral lipid transfer from the smaller to larger lipid droplets. The transfer direction may be driven by the internal pressure difference between the contacting lipid droplet pair. Promotes lipid exchange and lipid droplet fusion in both small and large lipid droplet-containing hepatocytes. In addition to its role in lipid droplet fusion, also involved in cytoplasmic vesicle biogenesis and transport. Required for very-low-density lipoprotein (VLDL) lipidation and maturation. Probably involved in the biogenesis of VLDL transport vesicles by forming a COPII vesicle coat and facilitating the formation of endoplasmic reticulum-derived large vesicles. Also involved in sterol-regulated export of the SCAP-SREBP complex, composed of SCAP, SREBF1/SREBP1 and SREBF2/SREBP2, by promoting loading of SCAP-SREBP into COPII vesicles. May also activate apoptosis. In terms of biological role, (Microbial infection) Involved in Hepatatis C virus (HCV) assembly and required for HCV entry into hepatocytes. In Homo sapiens (Human), this protein is Lipid transferase CIDEB.